Consider the following 116-residue polypeptide: Flagellar transcriptional regulator FlhD (116 aa).

This sequence belongs to the FlhD family. In terms of assembly, homodimer; disulfide-linked. Forms a heterohexamer composed of two FlhC and four FlhD subunits. Each FlhC binds a FlhD dimer, forming a heterotrimer, and a hexamer assembles by dimerization of two heterotrimers.

It localises to the cytoplasm. In terms of biological role, functions in complex with FlhC as a master transcriptional regulator that regulates transcription of several flagellar and non-flagellar operons by binding to their promoter region. Activates expression of class 2 flagellar genes, including fliA, which is a flagellum-specific sigma factor that turns on the class 3 genes. Also regulates genes whose products function in a variety of physiological pathways. This Salmonella arizonae (strain ATCC BAA-731 / CDC346-86 / RSK2980) protein is Flagellar transcriptional regulator FlhD.